An 853-amino-acid chain; its full sequence is Replication protein A 70 kDa DNA-binding subunit C (853 aa).

The interval 118–282 (PKEPGHSSIN…QSAYQPQQPP (165 aa)) is disordered. Composition is skewed to polar residues over residues 124-144 (SSIN…SEQQ), 159-173 (SANS…NSSD), 180-194 (SANS…SSSD), 201-211 (SANSPQRQVVH), 222-249 (PQVS…SSNA), and 263-278 (TATT…AYQP). A DNA-binding region (OB) is located at residues 312-399 (WTIKVRVTSK…NDYEIHLDSA (88 aa)). Residues 602 to 628 (CPIMNGDRPCSKKVTNNGDGTWRCEKC) form a C4-type zinc finger.

It belongs to the replication factor A protein 1 family. As to quaternary structure, heterotrimer of RPA1, RPA2 and RPA3 (canonical replication protein A complex).

Its subcellular location is the nucleus. Component of the replication protein A complex (RPA) required for DNA recombination, repair and replication. The activity of RPA is mediated by single-stranded DNA binding and protein interactions. Probably involved in repair of double-strand DNA breaks (DSBs) induced by genotoxic stresses. The sequence is that of Replication protein A 70 kDa DNA-binding subunit C (RPA1C) from Arabidopsis thaliana (Mouse-ear cress).